A 209-amino-acid chain; its full sequence is Guanylate kinase (209 aa).

Residues 5–184 (GLLIVFSGPS…AAERVKRVIE (180 aa)) form the Guanylate kinase-like domain. 12–19 (GPSGVGKG) is an ATP binding site.

The protein belongs to the guanylate kinase family.

The protein localises to the cytoplasm. The enzyme catalyses GMP + ATP = GDP + ADP. Essential for recycling GMP and indirectly, cGMP. This is Guanylate kinase from Streptococcus thermophilus (strain CNRZ 1066).